The chain runs to 208 residues: dITP/XTP pyrophosphatase (208 aa).

7–12 (SNNAKK) is a binding site for substrate. The Mg(2+) site is built by glutamate 39 and aspartate 68. Aspartate 68 functions as the Proton acceptor in the catalytic mechanism. Residues serine 69, 162–165 (FGYD), lysine 185, and 190–191 (HR) each bind substrate.

Belongs to the HAM1 NTPase family. In terms of assembly, homodimer. Requires Mg(2+) as cofactor.

It catalyses the reaction XTP + H2O = XMP + diphosphate + H(+). The enzyme catalyses dITP + H2O = dIMP + diphosphate + H(+). The catalysed reaction is ITP + H2O = IMP + diphosphate + H(+). Its function is as follows. Pyrophosphatase that catalyzes the hydrolysis of nucleoside triphosphates to their monophosphate derivatives, with a high preference for the non-canonical purine nucleotides XTP (xanthosine triphosphate), dITP (deoxyinosine triphosphate) and ITP. Seems to function as a house-cleaning enzyme that removes non-canonical purine nucleotides from the nucleotide pool, thus preventing their incorporation into DNA/RNA and avoiding chromosomal lesions. This chain is dITP/XTP pyrophosphatase, found in Methylibium petroleiphilum (strain ATCC BAA-1232 / LMG 22953 / PM1).